The sequence spans 77 residues: Surfactant-associated protein 2 (77 aa).

Residues 1 to 19 form the signal peptide; it reads MESLMRLFLLLALLSSSHA. N61 is a glycosylation site (N-linked (GlcNAc...) asparagine).

In terms of processing, N-glycosylated. In terms of tissue distribution, expressed in lung, and specifically in alveolar type II epithelial cells.

It is found in the secreted. Its subcellular location is the cytoplasmic vesicle. It localises to the secretory vesicle. The protein localises to the golgi apparatus. In terms of biological role, putative surfactant protein. In Mus musculus (Mouse), this protein is Surfactant-associated protein 2.